The chain runs to 321 residues: Putrescine export system permease protein SapB (321 aa).

Residues 1-8 (MIIFTLRR) are Cytoplasmic-facing. A helical membrane pass occupies residues 9–29 (ILLLIVTLFLLTFVGFSLSYF). Residues 30 to 80 (TPHAPLQGASLWNAWVFWFNGLIHWDFGVSSINGQPIAEQLKEVFPATMEL) lie on the Periplasmic side of the membrane. In terms of domain architecture, ABC transmembrane type-1 spans 74 to 302 (FPATMELCIL…SLVIIVNVIS (229 aa)). The helical transmembrane segment at 81–101 (CILAFGFALIVGIPVGMIAGI) threads the bilayer. Residues 102–112 (TRHKWQDNLIN) are Cytoplasmic-facing. Residues 113-133 (AIALLGFSIPVFWLALLLTLF) form a helical membrane-spanning segment. Residues 134-174 (CSLTLGWLPVSGRFDLLYEVKPITGFALIDAWLSDSPWRDE) lie on the Periplasmic side of the membrane. A helical transmembrane segment spans residues 175 to 195 (MIMSAIRHMILPVITLSVAPT). The Cytoplasmic segment spans residues 196-248 (TEVIRLMRISTIEVYDQNYVKAAATRGLSRFTILRRHVLHNALPPVIPRLGLQ). Residues 249 to 269 (FSTMLTLAMITEMVFSWPGLG) form a helical membrane-spanning segment. Over 270 to 280 (RWLINAIRQQD) the chain is Periplasmic. The chain crosses the membrane as a helical span at residues 281 to 301 (YAAISAGVMVCGSLVIIVNVI). At 302-321 (SDILGAMANPLKHKEWYALR) the chain is on the cytoplasmic side.

This sequence belongs to the binding-protein-dependent transport system permease family. OppBC subfamily.

It is found in the cell inner membrane. Functionally, part of a putrescine export transport system, does not play a role in resistance to antimicrobial peptides. This chain is Putrescine export system permease protein SapB (sapB), found in Escherichia coli (strain K12).